The following is a 171-amino-acid chain: UPF0398 protein MGAS10270_Spy1470 (171 aa).

The protein belongs to the UPF0398 family.

This Streptococcus pyogenes serotype M2 (strain MGAS10270) protein is UPF0398 protein MGAS10270_Spy1470.